The primary structure comprises 207 residues: Probable RNA 2'-phosphotransferase (207 aa).

Belongs to the KptA/TPT1 family.

Removes the 2'-phosphate from RNA via an intermediate in which the phosphate is ADP-ribosylated by NAD followed by a presumed transesterification to release the RNA and generate ADP-ribose 1''-2''-cyclic phosphate (APPR&gt;P). May function as an ADP-ribosylase. This chain is Probable RNA 2'-phosphotransferase, found in Methanosarcina acetivorans (strain ATCC 35395 / DSM 2834 / JCM 12185 / C2A).